We begin with the raw amino-acid sequence, 161 residues long: MPSFDVVCEPDMIELKNAIEQSNKEITNRFDFKGSDSRVEQKDEALILFGDDDFKLGQVRDVLINKMAKRNVDVRYLKDDKTETISGDKRKQTMKIQKGITSELAKKVVRIIKDSKIKVQASIQGDAVRVTGGKRDDLQETMALLKKEVTEAPLGFNNFRD.

It belongs to the YajQ family.

Nucleotide-binding protein. The sequence is that of Nucleotide-binding protein Pnec_0318 from Polynucleobacter necessarius subsp. necessarius (strain STIR1).